The sequence spans 290 residues: Glutamate 5-kinase (290 aa).

Residue lysine 21 coordinates ATP. Positions 60, 151, and 163 each coordinate substrate. 217–223 (TGGMFTK) contributes to the ATP binding site.

It belongs to the glutamate 5-kinase family.

Its subcellular location is the cytoplasm. It carries out the reaction L-glutamate + ATP = L-glutamyl 5-phosphate + ADP. Its pathway is amino-acid biosynthesis; L-proline biosynthesis; L-glutamate 5-semialdehyde from L-glutamate: step 1/2. Its function is as follows. Catalyzes the transfer of a phosphate group to glutamate to form L-glutamate 5-phosphate. This Leptospira interrogans serogroup Icterohaemorrhagiae serovar copenhageni (strain Fiocruz L1-130) protein is Glutamate 5-kinase.